Here is a 517-residue protein sequence, read N- to C-terminus: ATP synthase subunit beta (517 aa).

Composition is skewed to low complexity over residues 1–22 (MAKAATPKTTAAAEAKPAAAKA) and 29–42 (AKTAAAKSDAAPKA). A disordered region spans residues 1-42 (MAKAATPKTTAAAEAKPAAAKAPAKKAPAKTAAAKSDAAPKA). 195–202 (GGAGVGKT) contributes to the ATP binding site.

Belongs to the ATPase alpha/beta chains family. F-type ATPases have 2 components, CF(1) - the catalytic core - and CF(0) - the membrane proton channel. CF(1) has five subunits: alpha(3), beta(3), gamma(1), delta(1), epsilon(1). CF(0) has three main subunits: a(1), b(2) and c(9-12). The alpha and beta chains form an alternating ring which encloses part of the gamma chain. CF(1) is attached to CF(0) by a central stalk formed by the gamma and epsilon chains, while a peripheral stalk is formed by the delta and b chains.

It localises to the cell inner membrane. It catalyses the reaction ATP + H2O + 4 H(+)(in) = ADP + phosphate + 5 H(+)(out). In terms of biological role, produces ATP from ADP in the presence of a proton gradient across the membrane. The catalytic sites are hosted primarily by the beta subunits. The polypeptide is ATP synthase subunit beta (Brucella anthropi (strain ATCC 49188 / DSM 6882 / CCUG 24695 / JCM 21032 / LMG 3331 / NBRC 15819 / NCTC 12168 / Alc 37) (Ochrobactrum anthropi)).